Here is a 196-residue protein sequence, read N- to C-terminus: Recombination protein RecR (196 aa).

The C4-type zinc-finger motif lies at 57–72 (CERCNTFTEAPVCSTC). The Toprim domain maps to 80–175 (RQLCVVETPA…SVTRLARGVP (96 aa)).

It belongs to the RecR family.

May play a role in DNA repair. It seems to be involved in an RecBC-independent recombinational process of DNA repair. It may act with RecF and RecO. This chain is Recombination protein RecR, found in Methylibium petroleiphilum (strain ATCC BAA-1232 / LMG 22953 / PM1).